A 64-amino-acid chain; its full sequence is Large ribosomal subunit protein bL35 (64 aa).

This sequence belongs to the bacterial ribosomal protein bL35 family.

This chain is Large ribosomal subunit protein bL35, found in Streptomyces avermitilis (strain ATCC 31267 / DSM 46492 / JCM 5070 / NBRC 14893 / NCIMB 12804 / NRRL 8165 / MA-4680).